The following is a 417-amino-acid chain: Histidine--tRNA ligase (417 aa).

This sequence belongs to the class-II aminoacyl-tRNA synthetase family. In terms of assembly, homodimer.

It localises to the cytoplasm. The catalysed reaction is tRNA(His) + L-histidine + ATP = L-histidyl-tRNA(His) + AMP + diphosphate + H(+). The chain is Histidine--tRNA ligase from Oleidesulfovibrio alaskensis (strain ATCC BAA-1058 / DSM 17464 / G20) (Desulfovibrio alaskensis).